Consider the following 552-residue polypeptide: HTH-type transcriptional regulator SgrR (552 aa).

The 116-residue stretch at 1-116 (MPSGRLQQQF…LISHLGRSFR (116 aa)) folds into the HTH marR-type domain. The H-T-H motif DNA-binding region spans 26 to 49 (LNELADLLNCSRRHMRTLLNTMQA). Residues 163 to 493 (ELEADIAHHW…RDWQDDAAQW (331 aa)) are solute-binding.

In terms of biological role, activates the small RNA gene sgrS under glucose-phosphate stress conditions as well as yfdZ. Represses its own transcription under both stress and non-stress conditions. Might act as a sensor of the intracellular accumulation of phosphoglucose by binding these molecules in its C-terminal solute-binding domain. The chain is HTH-type transcriptional regulator SgrR from Salmonella typhi.